Consider the following 501-residue polypeptide: Splicing factor ESS-2 homolog (501 aa).

Composition is skewed to low complexity over residues 1–18 and 105–115; these read MSAT…GTPG and ISGTGRSTSRR. Disordered regions lie at residues 1 to 20 and 105 to 163; these read MSAT…PGSL and ISGT…GRDT. A compositionally biased stretch (polar residues) spans 126–151; it reads TPVSQAKCSNTPLPNSRATDTPFSTD. Positions 152-163 are enriched in basic and acidic residues; the sequence is GSEKSDAEGRDT. A phosphoserine mark is found at Ser409 and Ser411. Residues 425 to 471 form a disordered region; it reads RGTPRLRHTPSPMSGRKRKVTPGVVRSTNTPILGEPKPKQQAKISTP.

It belongs to the ESS2 family.

It is found in the nucleus. In Drosophila melanogaster (Fruit fly), this protein is Splicing factor ESS-2 homolog (Es2).